The following is a 387-amino-acid chain: MAQKKDYYEILGVPRNATQEEIKRAYRRLAKQYHPDANPGNKEAEEKFKEINEAYEVLSDPEKRRKYDQFGHAAFDPTYGAQGGGFSGGFTGGFADFDFGSFGDIFEDLFEGFDIFGSSRRRKEAPRKGADIQVDLELTLKESVFGCEKEIPIYRTEKCSVCGGSGVRPGATPVRCQKCGGTGQIRSRQATFFGEFTTIKTCDACGGVGTIITDPCRECGGTGTVRRQRRVKINIPAGIDDGQVITLGGEGESGIKGGPNGDLHIRIKIAPHPVFKRVGQDLYVEVPITFVNAALGGEIEIPTLDGKTKIRVEPGTQNGDEVRIKGKGVPYLRGRGRGDLVVKFVIEVPKKLSEKQKELLRKFEELSSEEGYEKRKHFWDRIREAFS.

One can recognise a J domain in the interval 6–71 (DYYEILGVPR…EKRRKYDQFG (66 aa)). The CR-type zinc-finger motif lies at 146–228 (GCEKEIPIYR…CGGTGTVRRQ (83 aa)). Cysteine 159, cysteine 162, cysteine 176, cysteine 179, cysteine 202, cysteine 205, cysteine 216, and cysteine 219 together coordinate Zn(2+). CXXCXGXG motif repeat units follow at residues 159 to 166 (CSVCGGSG), 176 to 183 (CQKCGGTG), 202 to 209 (CDACGGVG), and 216 to 223 (CRECGGTG).

This sequence belongs to the DnaJ family. As to quaternary structure, homodimer. It depends on Zn(2+) as a cofactor.

The protein localises to the cytoplasm. Functionally, participates actively in the response to hyperosmotic and heat shock by preventing the aggregation of stress-denatured proteins and by disaggregating proteins, also in an autonomous, DnaK-independent fashion. Unfolded proteins bind initially to DnaJ; upon interaction with the DnaJ-bound protein, DnaK hydrolyzes its bound ATP, resulting in the formation of a stable complex. GrpE releases ADP from DnaK; ATP binding to DnaK triggers the release of the substrate protein, thus completing the reaction cycle. Several rounds of ATP-dependent interactions between DnaJ, DnaK and GrpE are required for fully efficient folding. Also involved, together with DnaK and GrpE, in the DNA replication of plasmids through activation of initiation proteins. This chain is Chaperone protein DnaJ, found in Caldicellulosiruptor saccharolyticus (strain ATCC 43494 / DSM 8903 / Tp8T 6331).